The primary structure comprises 175 residues: MALETCLRGWALYAPQAGIRERLSSGSYAPSRPRTAAPAVVSPSPYKSALVAARRPSRFVCKCKNVVDEVIVADEKNWDNMVIACESPVLVEFWAPWCGPCRMIAPVIDELAKDYVGKIKCCKVNTDDCPNIASTYGIRSIPTVLMFKDGEKKESVIGAVPKTTLCTIIDKYIGS.

The N-terminal 62 residues, 1–62 (MALETCLRGW…ARRPSRFVCK (62 aa)), are a transit peptide targeting the chloroplast. In terms of domain architecture, Thioredoxin spans 63 to 174 (CKNVVDEVIV…LCTIIDKYIG (112 aa)). A disulfide bond links Cys98 and Cys101.

This sequence belongs to the thioredoxin family. Plant M-type subfamily. Forms a complex with heterodimeric ferredoxin-thioredoxin reductase (FTR) and ferredoxin.

It localises to the plastid. It is found in the chloroplast. In terms of biological role, participates in various redox reactions through the reversible oxidation of the active center dithiol to a disulfide. The M form is known to activate NADP-malate dehydrogenase. The protein is Thioredoxin M-type, chloroplastic of Triticum aestivum (Wheat).